Here is a 555-residue protein sequence, read N- to C-terminus: Formate--tetrahydrofolate ligase (555 aa).

65-72 (TPAGEGKS) contributes to the ATP binding site.

Belongs to the formate--tetrahydrofolate ligase family.

The enzyme catalyses (6S)-5,6,7,8-tetrahydrofolate + formate + ATP = (6R)-10-formyltetrahydrofolate + ADP + phosphate. It functions in the pathway one-carbon metabolism; tetrahydrofolate interconversion. The polypeptide is Formate--tetrahydrofolate ligase (Lactococcus lactis subsp. lactis (strain IL1403) (Streptococcus lactis)).